We begin with the raw amino-acid sequence, 502 residues long: Maturase K (502 aa).

It belongs to the intron maturase 2 family. MatK subfamily.

It is found in the plastid. The protein resides in the chloroplast. Functionally, usually encoded in the trnK tRNA gene intron. Probably assists in splicing its own and other chloroplast group II introns. The chain is Maturase K from Arabis blepharophylla (Coast rock-cress).